The sequence spans 327 residues: Aspartate carbamoyltransferase catalytic subunit (327 aa).

Residues arginine 73 and threonine 74 each contribute to the carbamoyl phosphate site. Lysine 101 lines the L-aspartate pocket. Arginine 123, histidine 153, and glutamine 156 together coordinate carbamoyl phosphate. Residues arginine 186 and arginine 241 each contribute to the L-aspartate site. 2 residues coordinate carbamoyl phosphate: glycine 282 and proline 283.

It belongs to the aspartate/ornithine carbamoyltransferase superfamily. ATCase family. In terms of assembly, heterododecamer (2C3:3R2) of six catalytic PyrB chains organized as two trimers (C3), and six regulatory PyrI chains organized as three dimers (R2).

The catalysed reaction is carbamoyl phosphate + L-aspartate = N-carbamoyl-L-aspartate + phosphate + H(+). The protein operates within pyrimidine metabolism; UMP biosynthesis via de novo pathway; (S)-dihydroorotate from bicarbonate: step 2/3. Catalyzes the condensation of carbamoyl phosphate and aspartate to form carbamoyl aspartate and inorganic phosphate, the committed step in the de novo pyrimidine nucleotide biosynthesis pathway. The chain is Aspartate carbamoyltransferase catalytic subunit from Acidithiobacillus ferrooxidans (strain ATCC 23270 / DSM 14882 / CIP 104768 / NCIMB 8455) (Ferrobacillus ferrooxidans (strain ATCC 23270)).